Consider the following 344-residue polypeptide: SUMO-activating enzyme subunit 1 (344 aa).

Belongs to the ubiquitin-activating E1 family. Heterodimer of sae1 and uba2/sae2. The heterodimer corresponds to the two domains that are encoded on a single polypeptide chain in ubiquitin-activating enzyme E1. Interacts with ube2i.

It is found in the nucleus. The protein operates within protein modification; protein sumoylation. Functionally, the heterodimer acts as an E1 ligase for sumo1, sumo2, and sumo3. It mediates ATP-dependent activation of sumo proteins followed by formation of a thioester bond between a sumo protein and a conserved active site cysteine residue on uba2/sae2. This is SUMO-activating enzyme subunit 1 (sae1) from Xenopus laevis (African clawed frog).